The primary structure comprises 347 residues: DNA polymerase III subunit delta (347 aa).

Belongs to the DNA polymerase HolA subunit family. Component of the DNA clamp loading complex consisting of tau(3):delta(1):delta'(1). The DNA polymerase III holoenzyme complex contains at least 10 different subunits organized into 3 functionally essential subassemblies: the Pol III core, the beta sliding clamp processivity factor and the clamp-loading complex. The Pol III core (subunits alpha, epsilon and theta) contains the polymerase and the 3'-5' exonuclease proofreading activities. The polymerase is tethered to the template via the dimeric beta sliding clamp processivity factor. The DNA clamp-loading complex assembles the beta sliding clamp onto the primed template and plays a central role in the organization and communication at the replication fork.

The protein localises to the cytoplasm. Its subcellular location is the nucleoid. The catalysed reaction is DNA(n) + a 2'-deoxyribonucleoside 5'-triphosphate = DNA(n+1) + diphosphate. Functionally, part of the beta sliding clamp loading complex, which hydrolyzes ATP to load the beta clamp onto primed DNA to form the DNA replication pre-initiation complex. DNA polymerase III is a complex, multichain enzyme responsible for most of the replicative synthesis in bacteria. This DNA polymerase also exhibits 3'-5' exonuclease activity. The delta subunit is the wrench that will open the beta subunit dimer. The DNA clamp loading complex (tau(3),delta,delta') is thought to load beta dimers onto DNA by binding ATP which alters the complex's conformation so it can bind beta sliding clamp dimers and open them at one interface. Primed DNA is recognized, ATP is hydrolyzed releasing the clamp loading complex and closing the beta sliding clamp ring around the primed DNA. The sequence is that of DNA polymerase III subunit delta from Bacillus subtilis (strain 168).